A 145-amino-acid polypeptide reads, in one-letter code: MFIGTYNHSIDSKNRMLIPSKVKATLNEVTFVYLSLGFDENIDMRLESEFNQFVDNINNLPIGSREARNLTRLLLSQTYKVEIDSASRILIPQNLIDKAKIKKDIYIIGTNDRYEIWAKEVYDDFSLNQEDTLSDLAEKLLINGI.

SpoVT-AbrB domains lie at T5 to E49 and T78 to V121.

The protein belongs to the MraZ family. Forms oligomers.

It is found in the cytoplasm. It localises to the nucleoid. In Ureaplasma urealyticum serovar 10 (strain ATCC 33699 / Western), this protein is Transcriptional regulator MraZ.